Here is a 346-residue protein sequence, read N- to C-terminus: Dehydrogenase azaJ (346 aa).

Residue 43–48 (VDYATQ) coordinates NADP(+). 133–140 (LAFSTAIV) contributes to the substrate binding site. Residues 170–173 (ATSV), 193–196 (SPHN), Y211, and 251–252 (LN) contribute to the NADP(+) site. Residue 269 to 273 (APPNV) participates in substrate binding. Position 336 to 337 (336 to 337 (VS)) interacts with NADP(+).

This sequence belongs to the zinc-containing alcohol dehydrogenase family.

Its pathway is secondary metabolite biosynthesis. In terms of biological role, dehydrogenase; part of the gene cluster that mediates the biosynthesis of azaphilones, a class of fungal metabolites characterized by a highly oxygenated pyrano-quinone bicyclic core and exhibiting a broad range of bioactivities. In the first step, the non-reducing polyketide synthase azaA forms the hexaketide precursor from successive condensations of five malonyl-CoA units, presumably with a simple acetyl-CoA starter unit. The reactive polyketide chain then undergoes a PT-mediated C2-C7 cyclization to afford the aromatic ring and is eventually released as an aldehyde through the R-domain. The putative ketoreductase azaE is proposed to catalyze the reduction of the terminal ketone resulting in the early culture product FK17-P2a. The monooxygenase azaH was demonstrated to be the only enzyme required to convert FK17-P2a to azanigerone E. AzaH first hydroxylates the benzaldehyde intermediate FK17-P2a at C4, which triggers the formation of the pyran-ring to afford azanigerone E. In parallel, the 2,4-dimethylhexanoyl chain is synthesized by the HR-PKS azaB and is proposed to be transferred to the C4-hydroxyl of azanigerone E by the acyltransferase azaD directly from the ACP domain of azaB. Alternatively, the 2,4-dimethyl-hexanoyl chain may be offloaded from the HR-PKS as a carboxylic acid and converted to an acyl-CoA by azaF. The resulting acyl-CoA molecule could then be taken up as a substrate by AzaD to form azanigerone B. To yield the carboxylic acid substituent in azanigerone A, the hydroxypropyl side chain of azanigerone B would need to undergo a C-C oxidative cleavage catalyzed by cytochrome P450 AzaI. AzaI is proposed to act on a vicinal diol that leads to a C-C bond scission either through an alkoxyradical intermediate or a peroxy complex. In the biosynthesis of azanigerone A, azanigerone B first undergoes hydroxylation at C10, possibly catalyzed by one of the two FAD-dependent monooxygenases encoded in the cluster, azaG or azaL, resulting in the vicinal diol azanigerone C. Oxidative cleavage of azanigerone C by azaI would yield the corresponding aldehyde derivative of azanigerone A. Finally, the dehydrogenase azaJ is proposed to convert the aldehyde functional group into the carboxylic acid, completing the conversion from azanigerone B to azanigerone A. Alternatively, the oxidation of aldehyde to carboxylic acid may be catalyzed by the same P450 enzyme azaI via consecutive oxidation or by endogenous alcohol dehydrogenase. The chain is Dehydrogenase azaJ from Aspergillus niger (strain ATCC 1015 / CBS 113.46 / FGSC A1144 / LSHB Ac4 / NCTC 3858a / NRRL 328 / USDA 3528.7).